A 118-amino-acid chain; its full sequence is Large ribosomal subunit protein uL18 (118 aa).

This sequence belongs to the universal ribosomal protein uL18 family. In terms of assembly, part of the 50S ribosomal subunit; part of the 5S rRNA/L5/L18/L25 subcomplex. Contacts the 5S and 23S rRNAs.

In terms of biological role, this is one of the proteins that bind and probably mediate the attachment of the 5S RNA into the large ribosomal subunit, where it forms part of the central protuberance. This chain is Large ribosomal subunit protein uL18, found in Campylobacter lari (strain RM2100 / D67 / ATCC BAA-1060).